Reading from the N-terminus, the 206-residue chain is Holliday junction branch migration complex subunit RuvA (206 aa).

The tract at residues 1-63 is domain I; the sequence is MISSLRGDVI…DDAHTLYAFS (63 aa). The domain II stretch occupies residues 64-142; it reads TSEQRETFGI…ALEATSGQAT (79 aa). The segment at 143-150 is flexible linker; that stretch reads IGDIAATG. Residues 151–206 form a domain III region; it reads NDTALQSQVVEALVGLGFTEAKAATAVKKILEEQNGTTDPSSVLREALQRLSGQKR.

It belongs to the RuvA family. Homotetramer. Forms an RuvA(8)-RuvB(12)-Holliday junction (HJ) complex. HJ DNA is sandwiched between 2 RuvA tetramers; dsDNA enters through RuvA and exits via RuvB. An RuvB hexamer assembles on each DNA strand where it exits the tetramer. Each RuvB hexamer is contacted by two RuvA subunits (via domain III) on 2 adjacent RuvB subunits; this complex drives branch migration. In the full resolvosome a probable DNA-RuvA(4)-RuvB(12)-RuvC(2) complex forms which resolves the HJ.

It localises to the cytoplasm. In terms of biological role, the RuvA-RuvB-RuvC complex processes Holliday junction (HJ) DNA during genetic recombination and DNA repair, while the RuvA-RuvB complex plays an important role in the rescue of blocked DNA replication forks via replication fork reversal (RFR). RuvA specifically binds to HJ cruciform DNA, conferring on it an open structure. The RuvB hexamer acts as an ATP-dependent pump, pulling dsDNA into and through the RuvAB complex. HJ branch migration allows RuvC to scan DNA until it finds its consensus sequence, where it cleaves and resolves the cruciform DNA. In Corynebacterium urealyticum (strain ATCC 43042 / DSM 7109), this protein is Holliday junction branch migration complex subunit RuvA.